Reading from the N-terminus, the 212-residue chain is Probable nicotinate-nucleotide adenylyltransferase (212 aa).

The protein belongs to the NadD family.

The catalysed reaction is nicotinate beta-D-ribonucleotide + ATP + H(+) = deamido-NAD(+) + diphosphate. It participates in cofactor biosynthesis; NAD(+) biosynthesis; deamido-NAD(+) from nicotinate D-ribonucleotide: step 1/1. Functionally, catalyzes the reversible adenylation of nicotinate mononucleotide (NaMN) to nicotinic acid adenine dinucleotide (NaAD). In Shewanella sp. (strain MR-4), this protein is Probable nicotinate-nucleotide adenylyltransferase.